Consider the following 793-residue polypeptide: Calcium permeable stress-gated cation channel 1 (793 aa).

Residues 1–21 (MAFNGYGIFDSDPRKNPSSDL) are Lumenal-facing. The chain crosses the membrane as a helical span at residues 22–42 (RTQFWLAFLLGASACVFFCFF). Residues 43-95 (RKRWKVLYAPRTTIEGLNLPTLSSSYYKWLMDLVNIPDDVVQNCAGLDGYVFL) are Cytoplasmic-facing. A helical membrane pass occupies residues 96-116 (LFFKMGIKFLSFASLLGVLII). At 117–192 (MPVNKHFRGD…IPGLPQPGDG (76 aa)) the chain is on the lumenal side. Residues 193–213 (FLYLYVLFTYFISIFLLYVLF) traverse the membrane as a helical segment. Over 214 to 444 (SSTKSIADIR…HKFFQGWFIT (231 aa)) the chain is Cytoplasmic. Residues 445 to 465 (LVTFMIILLWTVPVGAIAVFI) form a helical membrane-spanning segment. Over 466–493 (NLDTIRRLWPELGRMIEDLPFLNSLLRT) the chain is Lumenal. A helical membrane pass occupies residues 494-514 (FLPTLVYSLFISISPFLFRWL). The Cytoplasmic segment spans residues 515–534 (SSMQGLSSRAEEEIYAVGKN). A helical transmembrane segment spans residues 535–555 (YAYLFVNFFLVYVIAGSTSIW). Residues 556 to 577 (ELAKDTTSFAHFLANRLPHQAQ) are Lumenal-facing. A helical transmembrane segment spans residues 578–598 (FFIDLIVLQGIGMFPLKLIQL). At 599–646 (GKLSSYFVRRSFVPYSIASKKFETPDSFSVGIFLPQPMFIMLICLCYS) the chain is on the cytoplasmic side. A helical membrane pass occupies residues 647–667 (IISPLILVFGLIYFIIGFLVY). Topologically, residues 668-687 (KYELIYQMEHPQHSTGELWS) are lumenal. A helical membrane pass occupies residues 688 to 708 (TIFLRMIFGCVIMQLTMMGLM). The Cytoplasmic segment spans residues 709–713 (SLRKA). The chain crosses the membrane as a helical span at residues 714–734 (YWLSTVIFPLLCFTVISAYNF). Residues 735-793 (STMIRSSMQFVSLYYIRTHQSNTLSSESESRNSESSGSYVHPGFDLSNEELPLIDLNTA) are Lumenal-facing. A disordered region spans residues 759–778 (SSESESRNSESSGSYVHPGF).

It belongs to the CSC1 (TC 1.A.17) family.

Its subcellular location is the vacuole membrane. Functionally, acts as an osmosensitive calcium-permeable cation channel. The sequence is that of Calcium permeable stress-gated cation channel 1 from Schizosaccharomyces pombe (strain 972 / ATCC 24843) (Fission yeast).